The chain runs to 142 residues: Large ribosomal subunit protein uL13 (142 aa).

It belongs to the universal ribosomal protein uL13 family. Part of the 50S ribosomal subunit.

This protein is one of the early assembly proteins of the 50S ribosomal subunit, although it is not seen to bind rRNA by itself. It is important during the early stages of 50S assembly. This chain is Large ribosomal subunit protein uL13, found in Bordetella avium (strain 197N).